Reading from the N-terminus, the 275-residue chain is MTIHKAVKRITASEIRSRKGQEPIVSLTAYQAYSARIADPYCDLLLVGDSVGMVVHGFETTLPVSLDMMILHGQAVMRGSKRALVVVDMPFGSYEESPEQAFSNASRILAETGCSAVKLEGGVYIAETIDFLCKRGIPVMSHVGLTPQAVNRFGGFKTQGRNESNWQQIEADAAAIEKAGAFAVVVEGVVEPLAVKLTQMLSIPTIGIGASSQCDGQILVMEDMLGYGTWVPKFVRRYGVLEQEMEKAIKSYADDVKSRTFPSDEEIYKLKQKSG.

2 residues coordinate Mg(2+): Asp-49 and Asp-88. Residues 49 to 50 (DS), Asp-88, and Lys-118 each bind 3-methyl-2-oxobutanoate. Glu-120 serves as a coordination point for Mg(2+). Glu-187 acts as the Proton acceptor in catalysis.

This sequence belongs to the PanB family. As to quaternary structure, homodecamer; pentamer of dimers. Requires Mg(2+) as cofactor.

It is found in the cytoplasm. The enzyme catalyses 3-methyl-2-oxobutanoate + (6R)-5,10-methylene-5,6,7,8-tetrahydrofolate + H2O = 2-dehydropantoate + (6S)-5,6,7,8-tetrahydrofolate. The protein operates within cofactor biosynthesis; (R)-pantothenate biosynthesis; (R)-pantoate from 3-methyl-2-oxobutanoate: step 1/2. Its function is as follows. Catalyzes the reversible reaction in which hydroxymethyl group from 5,10-methylenetetrahydrofolate is transferred onto alpha-ketoisovalerate to form ketopantoate. This is 3-methyl-2-oxobutanoate hydroxymethyltransferase from Bartonella henselae (strain ATCC 49882 / DSM 28221 / CCUG 30454 / Houston 1) (Rochalimaea henselae).